The primary structure comprises 221 residues: uncharacterized protein (221 aa).

Residues methionine 1–proline 30 are disordered. The span at arginine 12 to arginine 25 shows a compositional bias: polar residues. Residues valine 37–isoleucine 57 form a helical membrane-spanning segment.

The protein resides in the membrane. This is an uncharacterized protein from Arabidopsis thaliana (Mouse-ear cress).